An 811-amino-acid chain; its full sequence is MGGGPRTFPGGLSKWQHKRMHEKLARHKERGLLRHEKQLYLARLRSEIRASRLPAAGASPPDDGDGPTSSRAHIRALADRFLLPGAEDLWNEDDGPIHRADRPRPPRRIVSVGGNGGDRRKLDSTKQELPRGGKEPRLAAFNPRRDFQTAAPWWWQWSSSSAIPSRTKEASFCFFGPKRSYSVMPLFQAHQESSGTSMVPLIARGLASARIAPSQLNGERFYSFAAGRFGRKLRPDSSDEDDEDISTAKKDMRFARFGASSEEESGYDELEARSAIRKKWSSAALRNCDMKKERRALKSYEEENNDLAGSFRELREEIKNREVLGAERRRYESRGESLFTNKRFEECGISPLTVKALTDAGYVQTTVVQETALPMCLEGKDVLVKAKTGTGKSAAFLLPAIESVLNAMKSHTNHRVSPIFSLILCPTRELAIQLTAEANVLLKYHQGIGVQSLIGGTRFKLDQRRLESDPCQILVATPGRLLDHIENKSSFSVRLMGLKLLVLDEADHLLDLGFRTDIEKIVDSLPRQRQTLLFSATIPKEVRRVSQLVLKRDHVFVDTVGLGAVETPTKVEQLYLVMPHELHFHMVYRLLREHIDQEVDYKVIVFCTTAMVTEFMYIMLRDLKLNVREIHSRKPQLYRTRISEEFRDSSRLILVTSDVSTRGVNYPGVTLVIQVGVPSDREHYIHRLGRTGREGKSGKGILLLAPWEEYFLNEIHDLPVQKSQTPNIDEEMKRKVDGSIKIVDMSIKEAAYHAWLGYYNSIGDVGRDKTMLVDLANRFCKSIGLEKPPALYRKTALKMGLKDVPGIRIRK.

Disordered regions lie at residues 1–32 (MGGG…ERGL) and 93–138 (DDGP…EPRL). The segment covering 15–29 (WQHKRMHEKLARHKE) has biased composition (basic residues). 2 stretches are compositionally biased toward basic and acidic residues: residues 95 to 104 (GPIHRADRPR) and 117 to 138 (GDRR…EPRL). Residues 286–333 (RNCDMKKERRALKSYEEENNDLAGSFRELREEIKNREVLGAERRRYES) adopt a coiled-coil conformation. The Q motif motif lies at 342-370 (KRFEECGISPLTVKALTDAGYVQTTVVQE). Residues 373–556 (LPMCLEGKDV…QLVLKRDHVF (184 aa)) form the Helicase ATP-binding domain. 386-393 (AKTGTGKS) lines the ATP pocket. A DEAD box motif is present at residues 504 to 507 (DEAD). Residues 570 to 740 (KVEQLYLVMP…EMKRKVDGSI (171 aa)) enclose the Helicase C-terminal domain.

This sequence belongs to the DEAD box helicase family.

It catalyses the reaction ATP + H2O = ADP + phosphate + H(+). This Oryza sativa subsp. japonica (Rice) protein is DEAD-box ATP-dependent RNA helicase 48.